The primary structure comprises 23 residues: Large ribosomal subunit protein uL10 (23 aa).

It belongs to the universal ribosomal protein uL10 family. In terms of assembly, part of the ribosomal stalk of the 50S ribosomal subunit. The N-terminus interacts with L11 and the large rRNA to form the base of the stalk. The C-terminus forms an elongated spine to which L12 dimers bind in a sequential fashion forming a multimeric L10(L12)X complex.

In terms of biological role, forms part of the ribosomal stalk, playing a central role in the interaction of the ribosome with GTP-bound translation factors. This Klebsiella pneumoniae protein is Large ribosomal subunit protein uL10 (rplJ).